The sequence spans 83 residues: Small ribosomal subunit protein bS16 (83 aa).

It belongs to the bacterial ribosomal protein bS16 family.

This is Small ribosomal subunit protein bS16 from Pseudoalteromonas atlantica (strain T6c / ATCC BAA-1087).